A 294-amino-acid polypeptide reads, in one-letter code: Ribosomal protein L11 methyltransferase (294 aa).

4 residues coordinate S-adenosyl-L-methionine: T145, G166, D188, and N230.

The protein belongs to the methyltransferase superfamily. PrmA family.

The protein resides in the cytoplasm. The enzyme catalyses L-lysyl-[protein] + 3 S-adenosyl-L-methionine = N(6),N(6),N(6)-trimethyl-L-lysyl-[protein] + 3 S-adenosyl-L-homocysteine + 3 H(+). In terms of biological role, methylates ribosomal protein L11. The polypeptide is Ribosomal protein L11 methyltransferase (Glaesserella parasuis serovar 5 (strain SH0165) (Haemophilus parasuis)).